Consider the following 285-residue polypeptide: Large ribosomal subunit protein uL2 (285 aa).

Residues 215–285 are disordered; that stretch reads GRSRHKGIRP…IIRNRKGEQY (71 aa). Residues 256–272 show a composition bias toward basic residues; it reads WGKRHMGVKTRNMKKHS.

It belongs to the universal ribosomal protein uL2 family. As to quaternary structure, part of the 50S ribosomal subunit. Forms a bridge to the 30S subunit in the 70S ribosome.

In terms of biological role, one of the primary rRNA binding proteins. Required for association of the 30S and 50S subunits to form the 70S ribosome, for tRNA binding and peptide bond formation. It has been suggested to have peptidyltransferase activity; this is somewhat controversial. Makes several contacts with the 16S rRNA in the 70S ribosome. The sequence is that of Large ribosomal subunit protein uL2 from Mycoplasma genitalium (strain ATCC 33530 / DSM 19775 / NCTC 10195 / G37) (Mycoplasmoides genitalium).